Here is a 229-residue protein sequence, read N- to C-terminus: ATP synthase subunit a (229 aa).

Helical transmembrane passes span 25–45 (ADAI…SILA), 82–102 (FFPL…IGLI), 111–131 (NINT…IVGI), 142–162 (FLGP…IGHF), 181–201 (LVLM…MMLM), and 202–222 (GVLV…IYIQ).

This sequence belongs to the ATPase A chain family. As to quaternary structure, F-type ATPases have 2 components, CF(1) - the catalytic core - and CF(0) - the membrane proton channel. CF(1) has five subunits: alpha(3), beta(3), gamma(1), delta(1), epsilon(1). CF(0) has three main subunits: a(1), b(2) and c(9-12). The alpha and beta chains form an alternating ring which encloses part of the gamma chain. CF(1) is attached to CF(0) by a central stalk formed by the gamma and epsilon chains, while a peripheral stalk is formed by the delta and b chains.

Its subcellular location is the cell inner membrane. Functionally, key component of the proton channel; it plays a direct role in the translocation of protons across the membrane. The protein is ATP synthase subunit a of Geotalea daltonii (strain DSM 22248 / JCM 15807 / FRC-32) (Geobacter daltonii).